The chain runs to 142 residues: Large ribosomal subunit protein uL11 (142 aa).

Belongs to the universal ribosomal protein uL11 family. As to quaternary structure, part of the ribosomal stalk of the 50S ribosomal subunit. Interacts with L10 and the large rRNA to form the base of the stalk. L10 forms an elongated spine to which L12 dimers bind in a sequential fashion forming a multimeric L10(L12)X complex. One or more lysine residues are methylated.

In terms of biological role, forms part of the ribosomal stalk which helps the ribosome interact with GTP-bound translation factors. The sequence is that of Large ribosomal subunit protein uL11 from Hamiltonella defensa subsp. Acyrthosiphon pisum (strain 5AT).